The primary structure comprises 334 residues: MRDPVTGFVYPAAWVEKVSDPAGLEKVRGGSAVLTSSGTVLLRGYTTGTTAAAACKAAILSLAGDISRVTIQLPCGLSADLPVKARAGHASCRKYAGDYPSDVTAGIEFIADAAVAQKGILLVPGPGIGHFVRDTPRYKKREPAISTAPLACILSSMEEALGATGLSGATVTLSIPEGRTIADQTLNPRIGIEGGISVLGSTGLVEPWDDHLEDSVIARVAGATDPVITTGRVGLRYARLLFPDREVVLAGGKIKGALAAAKGEVTLCGLPALILKYIEPHILDKTGYATVEELAASPSFPSVALPILVAYKKKHPRVRVVLVNREGTVIAESP.

The protein belongs to the CbiD family.

It catalyses the reaction Co-precorrin-5B + S-adenosyl-L-methionine = Co-precorrin-6A + S-adenosyl-L-homocysteine. It participates in cofactor biosynthesis; adenosylcobalamin biosynthesis; cob(II)yrinate a,c-diamide from sirohydrochlorin (anaerobic route): step 6/10. Catalyzes the methylation of C-1 in cobalt-precorrin-5B to form cobalt-precorrin-6A. The chain is Cobalt-precorrin-5B C(1)-methyltransferase from Methanoregula boonei (strain DSM 21154 / JCM 14090 / 6A8).